We begin with the raw amino-acid sequence, 244 residues long: Small ribosomal subunit protein eS6 (244 aa).

The segment at 185-244 is disordered; sequence RLQRKRHMRAVKRRRYAKQREEEATYAKLLAKRKKEEREAHAKRRSSARESSLRESKSKA. The segment covering 186–201 has biased composition (basic residues); the sequence is LQRKRHMRAVKRRRYA. Over residues 231 to 244 the composition is skewed to basic and acidic residues; it reads SARESSLRESKSKA.

The protein belongs to the eukaryotic ribosomal protein eS6 family. In terms of processing, ribosomal protein S6 is the major substrate of protein kinases in eukaryote ribosomes.

Component of the 40S small ribosomal subunit. Plays an important role in controlling cell growth and proliferation through the selective translation of particular classes of mRNA. This chain is Small ribosomal subunit protein eS6 (RPS6), found in Branchiostoma floridae (Florida lancelet).